A 985-amino-acid chain; its full sequence is Alanine--tRNA ligase, mitochondrial (985 aa).

A mitochondrion-targeting transit peptide spans 1 to 23; the sequence is MAASVAAAARRLRRAIRRSPAWR. ATP is bound by residues Arg110, His128, Trp210, and 240–242; that span reads LWN. The L-alanine site is built by Asn242 and Asp265. Residue Gly269 participates in ATP binding. Zn(2+) contacts are provided by His632, His636, Cys749, and His753.

The protein belongs to the class-II aminoacyl-tRNA synthetase family. In terms of assembly, monomer. Requires Zn(2+) as cofactor.

It localises to the mitochondrion. It catalyses the reaction tRNA(Ala) + L-alanine + ATP = L-alanyl-tRNA(Ala) + AMP + diphosphate. The enzyme catalyses (S)-lactate + ATP + H(+) = (S)-lactoyl-AMP + diphosphate. It carries out the reaction (S)-lactoyl-AMP + L-lysyl-[protein] = N(6)-[(S)-lactoyl]-L-lysyl-[protein] + AMP + 2 H(+). Its function is as follows. Catalyzes the attachment of alanine to tRNA(Ala) in a two-step reaction: alanine is first activated by ATP to form Ala-AMP and then transferred to the acceptor end of tRNA(Ala). Also edits incorrectly charged tRNA(Ala) via its editing domain. In presence of high levels of lactate, also acts as a protein lactyltransferase that mediates lactylation of lysine residues in target proteins, such as CGAS. Acts as an inhibitor of cGAS/STING signaling by catalyzing lactylation of CGAS, preventing the formation of liquid-like droplets in which CGAS is activated. The chain is Alanine--tRNA ligase, mitochondrial from Homo sapiens (Human).